Here is a 215-residue protein sequence, read N- to C-terminus: Transmembrane protein 267 (215 aa).

The next 3 helical transmembrane spans lie at 77–97 (FGEV…HFFQ), 114–134 (FLHC…AVHL), and 178–198 (SSFY…LMYL).

Its subcellular location is the membrane. The chain is Transmembrane protein 267 from Mus musculus (Mouse).